The sequence spans 159 residues: MQRVGNTFSNESRVASRCPSVGLAERNRVATMPVRLLRDSPAAQEDNDHARDGFQMKLDAHGFAPEELVVQVDGQWLMVTGQQQLDVRDPERVSYRMSQKVHRKMLPSNLSPTAMTCCLTPSGQLWVRGQCVALALPEAQTGPSPRLGSLGSKASNLTR.

Residues 36 to 147 form the sHSP domain; the sequence is LLRDSPAAQE…EAQTGPSPRL (112 aa).

It belongs to the small heat shock protein (HSP20) family. As to expression, testis specific.

It is found in the cytoplasm. Its subcellular location is the nucleus. The chain is Heat shock protein beta-9 (HSPB9) from Homo sapiens (Human).